The chain runs to 78 residues: Large ribosomal subunit protein bL28 (78 aa).

Belongs to the bacterial ribosomal protein bL28 family.

This Francisella philomiragia subsp. philomiragia (strain ATCC 25017 / CCUG 19701 / FSC 153 / O#319-036) protein is Large ribosomal subunit protein bL28.